The following is a 159-amino-acid chain: MRCPFCGAEDTSVVDSRISEEGARIRRRRRCVECEKRFTTYETVELRFPQVIKQDGNRVEFNREKLYTSFARALHKRPVPTGQVDAAIERILQKLLGSGVQEISSRTIGEWVMQELYSLDKVAYIRFASVYRSFEDVGDFQEVIREVQSSPQNGDGPSS.

A zinc finger spans residues 3 to 34; the sequence is CPFCGAEDTSVVDSRISEEGARIRRRRRCVEC. An ATP-cone domain is found at 49–139; sequence PQVIKQDGNR…VYRSFEDVGD (91 aa).

This sequence belongs to the NrdR family. Zn(2+) is required as a cofactor.

Its function is as follows. Negatively regulates transcription of bacterial ribonucleotide reductase nrd genes and operons by binding to NrdR-boxes. The protein is Transcriptional repressor NrdR of Nitrosomonas europaea (strain ATCC 19718 / CIP 103999 / KCTC 2705 / NBRC 14298).